The following is a 403-amino-acid chain: Blue light- and temperature-regulated antirepressor BluF (403 aa).

The 92-residue stretch at 2–93 folds into the BLUF domain; it reads LTTLIYRSHI…ARRFGKAGME (92 aa). The segment at 98–144 is joining helix; sequence RLHERDDVLQAVFDKGTSKFQLTYDDRALQFFRTFVLATEQSTYFEI. The 249-residue stretch at 155-403 folds into the EAL domain; that stretch reads DGSDKELDSC…IPSIAWPEKK (249 aa).

As to quaternary structure, monomer, it undergoes transient dimerization following photoexcitation or upon temperature reduction, with a relaxation time of about 2 minutes. The dimer may be the inactive state. Interacts with the N- and C-terminal domains of BluR. Can also interact with the C-terminal domain of MlrA. The cofactor is FAD.

Its function is as follows. Binds to and releases the BluR repressor from its bound DNA target in a blue light-dependent (470 nm) fashion. A shift to low temperature also triggers a BluF-mediated relief of repression by BluR, suggesting BluF may serve as a thermometer. Blue light may act to increase the affinity of BluF for BluR, allowing it to be released from its operator. The protein has a reversible photocycle, and undergoes structural changes, probably in the EAL domain, in response to light. The polypeptide is Blue light- and temperature-regulated antirepressor BluF (Escherichia coli (strain K12)).